Reading from the N-terminus, the 502-residue chain is Glutamate--tRNA ligase (502 aa).

Residues Pro9–Thr19 carry the 'HIGH' region motif. Positions Lys250–Arg254 match the 'KMSKS' region motif. Lys253 lines the ATP pocket.

The protein belongs to the class-I aminoacyl-tRNA synthetase family. Glutamate--tRNA ligase type 1 subfamily. As to quaternary structure, monomer.

The protein localises to the cytoplasm. The enzyme catalyses tRNA(Glu) + L-glutamate + ATP = L-glutamyl-tRNA(Glu) + AMP + diphosphate. In terms of biological role, catalyzes the attachment of glutamate to tRNA(Glu) in a two-step reaction: glutamate is first activated by ATP to form Glu-AMP and then transferred to the acceptor end of tRNA(Glu). The protein is Glutamate--tRNA ligase of Acinetobacter baylyi (strain ATCC 33305 / BD413 / ADP1).